Reading from the N-terminus, the 159-residue chain is ATP synthase subunit b 2 (159 aa).

A helical membrane pass occupies residues 1–21 (MDATFWAFIALVIFVAIVVYM).

The protein belongs to the ATPase B chain family. F-type ATPases have 2 components, F(1) - the catalytic core - and F(0) - the membrane proton channel. F(1) has five subunits: alpha(3), beta(3), gamma(1), delta(1), epsilon(1). F(0) has three main subunits: a(1), b(2) and c(10-14). The alpha and beta chains form an alternating ring which encloses part of the gamma chain. F(1) is attached to F(0) by a central stalk formed by the gamma and epsilon chains, while a peripheral stalk is formed by the delta and b chains.

It localises to the cell inner membrane. F(1)F(0) ATP synthase produces ATP from ADP in the presence of a proton or sodium gradient. F-type ATPases consist of two structural domains, F(1) containing the extramembraneous catalytic core and F(0) containing the membrane proton channel, linked together by a central stalk and a peripheral stalk. During catalysis, ATP synthesis in the catalytic domain of F(1) is coupled via a rotary mechanism of the central stalk subunits to proton translocation. In terms of biological role, component of the F(0) channel, it forms part of the peripheral stalk, linking F(1) to F(0). The polypeptide is ATP synthase subunit b 2 (Brucella abortus (strain S19)).